Consider the following 230-residue polypeptide: Ribosome maturation factor RimM (230 aa).

One can recognise a PRC barrel domain in the interval 149–230 (ADEFYWVDLI…RVVVDWEADY (82 aa)).

This sequence belongs to the RimM family. In terms of assembly, binds ribosomal protein uS19.

The protein localises to the cytoplasm. In terms of biological role, an accessory protein needed during the final step in the assembly of 30S ribosomal subunit, possibly for assembly of the head region. Essential for efficient processing of 16S rRNA. May be needed both before and after RbfA during the maturation of 16S rRNA. It has affinity for free ribosomal 30S subunits but not for 70S ribosomes. The polypeptide is Ribosome maturation factor RimM (Burkholderia mallei (strain NCTC 10229)).